Here is a 470-residue protein sequence, read N- to C-terminus: Suppressor of SWI4 1 homolog (470 aa).

The region spanning 29 to 292 is the Brix domain; it reads PHSFVFTRGR…LIKIQEGVGN (264 aa). A phosphoserine mark is found at Ser-238 and Ser-240. Disordered regions lie at residues 240-264 and 323-470; these read SEVE…GNMQ and AQRQ…RRRN. Residues 342–355 are compositionally biased toward basic residues; that stretch reads AHKKKSLAGIKRAR. The residue at position 362 (Ser-362) is a Phosphoserine. The residue at position 441 (Lys-441) is an N6-acetyllysine. Residues 447–457 are compositionally biased toward basic residues; sequence QRGKAKPRPRA.

The protein localises to the nucleus. It is found in the nucleolus. Functionally, may have a role in cell growth. The polypeptide is Suppressor of SWI4 1 homolog (Ppan) (Mus musculus (Mouse)).